Here is a 322-residue protein sequence, read N- to C-terminus: tRNA-dihydrouridine synthase B (322 aa).

Residues 16–18 and Gln70 contribute to the FMN site; that span reads PMA. Cys100 serves as the catalytic Proton donor. Residues Lys139, 200 to 202, and 224 to 225 contribute to the FMN site; these read NGD and GR.

The protein belongs to the Dus family. DusB subfamily. FMN serves as cofactor.

The enzyme catalyses a 5,6-dihydrouridine in tRNA + NAD(+) = a uridine in tRNA + NADH + H(+). It catalyses the reaction a 5,6-dihydrouridine in tRNA + NADP(+) = a uridine in tRNA + NADPH + H(+). In terms of biological role, catalyzes the synthesis of 5,6-dihydrouridine (D), a modified base found in the D-loop of most tRNAs, via the reduction of the C5-C6 double bond in target uridines. This Vibrio vulnificus (strain CMCP6) protein is tRNA-dihydrouridine synthase B.